Reading from the N-terminus, the 503-residue chain is MQATPGQRVRTRFAPSPTGHLHVGGLRTALYNYLYAKSMGGDFIVRIEDTDQARKVEGAERSLLNTLEVTGIVPDESFIHGGNFGPYVQSERLGIYSKYCEQLLEQKQAYYCFSTAEELEANRKLQMKQGMQPKYDRKWLPEEMGGNMPESEIRRKREEGAPFVVRMKVPDYISIMFEDMIRGPIEFDSATVDDQVLMKSDGFPTYHFASIIDDHLMEISHVIRGEEWLSSMPKHILLYEFFGWEPPKVAHLPLLLNPDRSKLSKRQGDVAAEDFISKGYSPEAIINFVALLGWNEGEGCEREVYSLDELKDKFTLRRVGKAGAVFNVEKLGWLEKQYIKARPASEIISAIKPLLQAELAKKETGMDADRLVSDDYLGQVIELMRERVNFEHEFISFSRYFYFDPEEFDEKAVAKRWVDDTNEVLGEFIEVLENTADFSADNIEAALKAFVAPREKKPAFLIHPVRILTSGVGFGPSLYHMLEVLGKETVIRRLRKGIGVVGK.

The 'HIGH' region signature appears at 15 to 25; sequence PSPTGHLHVGG. A 'KMSKS' region motif is present at residues 262 to 266; sequence KLSKR. Lys-265 lines the ATP pocket.

This sequence belongs to the class-I aminoacyl-tRNA synthetase family. Glutamate--tRNA ligase type 1 subfamily. In terms of assembly, monomer.

Its subcellular location is the cytoplasm. It catalyses the reaction tRNA(Glu) + L-glutamate + ATP = L-glutamyl-tRNA(Glu) + AMP + diphosphate. Its function is as follows. Catalyzes the attachment of glutamate to tRNA(Glu) in a two-step reaction: glutamate is first activated by ATP to form Glu-AMP and then transferred to the acceptor end of tRNA(Glu). The chain is Glutamate--tRNA ligase from Chlorobium phaeobacteroides (strain BS1).